A 665-amino-acid polypeptide reads, in one-letter code: Macrolide export ATP-binding/permease protein MacB (665 aa).

An ABC transporter domain is found at 17–255 (MQVKGLIREF…AAQPASIIDK (239 aa)). 53–60 (GQSGSGKS) is an ATP binding site. Transmembrane regions (helical) follow at residues 287 to 307 (LLTMLGIIIGIASVVSVVGLG), 544 to 564 (IAIISLIVGGIGVMNIMLVSV), 588 to 608 (FLIEAILVCILGGLLGIGLAF), and 630 to 650 (SIIAAFVCSTLIGVVFGFLPA).

Belongs to the ABC transporter superfamily. Macrolide exporter (TC 3.A.1.122) family. Homodimer. Part of the tripartite efflux system MacAB-TolC, which is composed of an inner membrane transporter, MacB, a periplasmic membrane fusion protein, MacA, and an outer membrane component, TolC. The complex forms a large protein conduit and can translocate molecules across both the inner and outer membranes. Interacts with MacA.

It localises to the cell inner membrane. In terms of biological role, part of the tripartite efflux system MacAB-TolC. MacB is a non-canonical ABC transporter that contains transmembrane domains (TMD), which form a pore in the inner membrane, and an ATP-binding domain (NBD), which is responsible for energy generation. Confers resistance against macrolides. This Psychrobacter cryohalolentis (strain ATCC BAA-1226 / DSM 17306 / VKM B-2378 / K5) protein is Macrolide export ATP-binding/permease protein MacB.